A 231-amino-acid polypeptide reads, in one-letter code: Uridylate cyclase (231 aa).

A Guanylate cyclase domain is found at 46 to 178 (TVLYADLDGS…RAANYAAKLT (133 aa)). Y49 contributes to the a ribonucleoside 5'-triphosphate binding site. Residues D51 and D95 each contribute to the Mn(2+) site. Residue R96 participates in a ribonucleoside 5'-triphosphate binding.

Belongs to the adenylyl cyclase class-4/guanylyl cyclase family. Pyrimidine cyclase subfamily. As to quaternary structure, homodimer. Mn(2+) is required as a cofactor.

It localises to the cytoplasm. The enzyme catalyses UTP = 3',5'-cyclic UMP + diphosphate. Pycsar (pyrimidine cyclase system for antiphage resistance) provides immunity against bacteriophage. The pyrimidine cyclase (PycC) synthesizes cyclic nucleotides in response to infection; these serve as specific second messenger signals. The signal activates the adjacent effector, leading to bacterial cell death and abortive phage infection. A clade B Pycsar system. In terms of biological role, the pyrimidine cyclase gene of a two-gene Pycsar system, generates cyclic UMP (cUMP) from UTP probably in response to bacteriophage infection. Expression of this and adjacent effector XpPycTIR (AC P0DV29) confers resistance to bacteriophage T7. When cells expressing the Pycsar system are infected phage T7 at low multiplicity of infection (0.2 MOI) the culture survives, at 2.0 MOI bacteria enter growth arrest. The same cells enter growth arrest after exposure to 2.5 mM cUMP but not cCMP; the effector protein responds only to the cUMP produced by its cognate NTP cyclase. The polypeptide is Uridylate cyclase (Xanthomonas perforans).